The following is a 316-amino-acid chain: MNLDYLDFEQPIVELEEKIQALDNIKDKADIVDEMGALKIKSNALTKKIFSSLSDWQISQLARHPKRLYTLDYISHVFDEFTELHGDRIYGDDHAIIGGIARLDAQPVMFIGQQKGRTTQEKLKYNFGMPRPEGYRKALRLMKLSEKFSMPIITFIDTPGAYPGIGAEERGQSEAIAKNLFEMSTLATPIISVVIGEGGSGGALAIGVADIIMMFKYSIYSVISPEGCASILYKDATKANLAAESLKLTSAHLKENGLIDIIIDEPLGGIHRDPSQAKVLLKEALIQQLNEIKQLPIEQLLQNRQEKLLNFGKFKD.

Residues 24-291 enclose the CoA carboxyltransferase C-terminal domain; sequence NIKDKADIVD…KEALIQQLNE (268 aa).

It belongs to the AccA family. As to quaternary structure, acetyl-CoA carboxylase is a heterohexamer composed of biotin carboxyl carrier protein (AccB), biotin carboxylase (AccC) and two subunits each of ACCase subunit alpha (AccA) and ACCase subunit beta (AccD).

Its subcellular location is the cytoplasm. The catalysed reaction is N(6)-carboxybiotinyl-L-lysyl-[protein] + acetyl-CoA = N(6)-biotinyl-L-lysyl-[protein] + malonyl-CoA. The protein operates within lipid metabolism; malonyl-CoA biosynthesis; malonyl-CoA from acetyl-CoA: step 1/1. Its function is as follows. Component of the acetyl coenzyme A carboxylase (ACC) complex. First, biotin carboxylase catalyzes the carboxylation of biotin on its carrier protein (BCCP) and then the CO(2) group is transferred by the carboxyltransferase to acetyl-CoA to form malonyl-CoA. This Ruthia magnifica subsp. Calyptogena magnifica protein is Acetyl-coenzyme A carboxylase carboxyl transferase subunit alpha.